Here is a 302-residue protein sequence, read N- to C-terminus: MTTPQFGSQRSDDDNWDIVSSVGYTALLVAGWRALHAVSPRPLVRDDYAKTFIAASGDPYLTGVLANPGTSEDELAFPRLYGAQTRFFDDFFDAAGAAGIRQAVIIAAGLDSRAYRLEWPPATTVFEVDLAKVLEFKARVLGEQGAVPKARRVEVAADLRADWSRPLEAAGFDVESPSAWSVEGLLPYLTDEAQHALFTRISGLSAPGSRIAIGALGSRLDHDQLHALEESHPGVDVSGNVDFSALTYEPQSDPAEWLAAHGWVVDPVRNTLDLQAGYGMTPPEVDVKIDGFMRSQYITAAR.

S-adenosyl-L-methionine-binding positions include Asp129 and 158–159; that span reads DL.

Belongs to the UPF0677 family.

Exhibits S-adenosyl-L-methionine-dependent methyltransferase activity. The chain is Putative S-adenosyl-L-methionine-dependent methyltransferase MAP_1622c from Mycolicibacterium paratuberculosis (strain ATCC BAA-968 / K-10) (Mycobacterium paratuberculosis).